We begin with the raw amino-acid sequence, 337 residues long: UDP-3-O-acylglucosamine N-acyltransferase (337 aa).

The active-site Proton acceptor is the His238.

The protein belongs to the transferase hexapeptide repeat family. LpxD subfamily. As to quaternary structure, homotrimer.

It carries out the reaction a UDP-3-O-[(3R)-3-hydroxyacyl]-alpha-D-glucosamine + a (3R)-hydroxyacyl-[ACP] = a UDP-2-N,3-O-bis[(3R)-3-hydroxyacyl]-alpha-D-glucosamine + holo-[ACP] + H(+). Its pathway is bacterial outer membrane biogenesis; LPS lipid A biosynthesis. Its function is as follows. Catalyzes the N-acylation of UDP-3-O-acylglucosamine using 3-hydroxyacyl-ACP as the acyl donor. Is involved in the biosynthesis of lipid A, a phosphorylated glycolipid that anchors the lipopolysaccharide to the outer membrane of the cell. The chain is UDP-3-O-acylglucosamine N-acyltransferase from Xanthomonas euvesicatoria pv. vesicatoria (strain 85-10) (Xanthomonas campestris pv. vesicatoria).